We begin with the raw amino-acid sequence, 236 residues long: MSAPDLKRAAAERAIPLVEDGMRLGIGTGSTAAAFIKLLGERVRAGLKVTGVPTSEATRIACEREGIPLATLEDLPELDLTIDGADEVDGSLRLIKGGGAALLREKIVAVASRRMVVIADASKHVETLGAFPLPVEVNLFGIGATTRAVEAAVARAGCTGEIVRRHEASGAPLLTDGGHAILDLRLGRIPDPEALSAGLWAVPGVVEHGLFLGIADAAILAAAEGDTAVVSVLGRL.

Substrate-binding positions include 28-31 (TGST), 83-86 (DGAD), and 96-99 (KGGG). The active-site Proton acceptor is Glu105. Lys123 provides a ligand contact to substrate.

This sequence belongs to the ribose 5-phosphate isomerase family. As to quaternary structure, homodimer.

The enzyme catalyses aldehydo-D-ribose 5-phosphate = D-ribulose 5-phosphate. It participates in carbohydrate degradation; pentose phosphate pathway; D-ribose 5-phosphate from D-ribulose 5-phosphate (non-oxidative stage): step 1/1. Functionally, catalyzes the reversible conversion of ribose-5-phosphate to ribulose 5-phosphate. The polypeptide is Ribose-5-phosphate isomerase A (Methylorubrum extorquens (strain CM4 / NCIMB 13688) (Methylobacterium extorquens)).